Consider the following 367-residue polypeptide: WAT1-related protein At3g28050 (367 aa).

Helical transmembrane passes span 10 to 30, 40 to 60, 73 to 93, 103 to 123, 142 to 162, 179 to 199, 211 to 231, 246 to 266, 276 to 296, and 301 to 321; these read VLPV…NTLF, FHVF…PSLF, FSIL…NIMG, TLAS…AVVF, TVVS…VVIA, WILG…WYIV, FTVV…VTLF, IALV…NTIH, LFVA…GVIF, and LYIG…TVMW. EamA domains lie at 25-153 and 195-319; these read GLNT…FIVT and LWYI…FYTV. A disordered region spans residues 338 to 367; that stretch reads HEEANEADLDSPSGSQKAPLLESYKNDEHV.

Belongs to the drug/metabolite transporter (DMT) superfamily. Plant drug/metabolite exporter (P-DME) (TC 2.A.7.4) family.

It is found in the membrane. This Arabidopsis thaliana (Mouse-ear cress) protein is WAT1-related protein At3g28050.